The sequence spans 499 residues: Aprataxin and PNK-like factor (499 aa).

The region spanning 1–108 (MPSDFFLQPL…RVFSAESEVE (108 aa)) is the FHA-like domain. Position 116 is a phosphoserine; by ATM (Ser116). Disordered stretches follow at residues 134–183 (VNLP…TQRK), 197–292 (DQSL…KTNK), and 305–358 (VSKH…DTAD). Residues 141 to 152 (TGASQLQGSPEI) are compositionally biased toward polar residues. The residue at position 149 (Ser149) is a Phosphoserine. Positions 182-191 (RKRILPAWML) match the KBM motif. Positions 239 to 248 (PSGNSKSVSA) are enriched in polar residues. Residues 251-261 (DPGKKCRKADQ) show a composition bias toward basic and acidic residues. The span at 264-278 (PGVSSENVPESSSSN) shows a compositional bias: low complexity. A compositionally biased stretch (basic and acidic residues) spans 281–292 (KDPDVDIVKTNK). The segment covering 340–349 (PESSSAPSSP) has biased composition (low complexity). Arg371, Tyr376, Tyr381, and Arg382 together coordinate a glycoprotein. The PBZ-type 1 zinc finger occupies 372–393 (TACMYGANCYRRNPLHFQHFSH). Positions 401-411 (EVHGTDEGVIG) are flexible linker. A PBZ-type 2 zinc finger spans residues 414-435 (PECPYGASCYRKNPQHKMEYRH). Tyr418, Tyr423, and Arg424 together coordinate a glycoprotein. The segment at 440-499 (ARVALDEDDDDVGQPSDDEDEEDYEPTDEDSDWHPGKDDEEQEDVDELLKEAKSSLHLKH) is disordered. Residues 445-470 (DEDDDDVGQPSDDEDEEDYEPTDEDS) show a composition bias toward acidic residues. Residues 463–487 (YEPTDEDSDWHPGKDDEEQEDVDEL) carry the NAP1L motif motif.

The protein belongs to the APLF family. In terms of assembly, interacts with LIG4. Interacts with PARP1. Interacts with XRCC4. Interacts (via KBM motif) with XRCC5 and XRCC6; promoting recruitment to DNA damage sites. Interacts with XRCC1. Interacts (via C-terminal disordered region) with histones; interacts with histone H2A, H2B and H3-H4. Poly-ADP-ribosylated. In addition to binding non covalently poly-ADP-ribose via its PBZ-type zinc fingers, the protein is also covalently poly-ADP-ribosylated by PARP1. Post-translationally, phosphorylated in an ATM-dependent manner upon double-strand DNA break.

The protein resides in the nucleus. The protein localises to the chromosome. Its subcellular location is the cytoplasm. It is found in the cytosol. Functionally, histone chaperone involved in single-strand and double-strand DNA break repair. Recruited to sites of DNA damage through interaction with branched poly-ADP-ribose chains, a polymeric post-translational modification synthesized transiently at sites of chromosomal damage to accelerate DNA strand break repair reactions. Following recruitment to DNA damage sites, acts as a histone chaperone that mediates histone eviction during DNA repair and promotes recruitment of histone variant MACROH2A1. Also has a nuclease activity: displays apurinic-apyrimidinic (AP) endonuclease and 3'-5' exonuclease activities in vitro. Also able to introduce nicks at hydroxyuracil and other types of pyrimidine base damage. Together with PARP3, promotes the retention of the LIG4-XRCC4 complex on chromatin and accelerate DNA ligation during non-homologous end-joining (NHEJ). Also acts as a negative regulator of cell pluripotency by promoting histone exchange. Required for the embryo implantation during the epithelial to mesenchymal transition in females. The polypeptide is Aprataxin and PNK-like factor (Aplf) (Mus musculus (Mouse)).